The primary structure comprises 177 residues: Protein GrpE (177 aa).

This sequence belongs to the GrpE family. In terms of assembly, homodimer. It depends on K(+) as a cofactor.

It localises to the cytoplasm. Functionally, participates actively in the response to hyperosmotic and heat shock by preventing the aggregation of stress-denatured proteins, in association with DnaK and GrpE. It is the nucleotide exchange factor for DnaK and may function as a thermosensor. Unfolded proteins bind initially to DnaJ; upon interaction with the DnaJ-bound protein, DnaK hydrolyzes its bound ATP, resulting in the formation of a stable complex. GrpE releases ADP from DnaK; ATP binding to DnaK triggers the release of the substrate protein, thus completing the reaction cycle. Several rounds of ATP-dependent interactions between DnaJ, DnaK and GrpE are required for fully efficient folding. This chain is Protein GrpE, found in Thermus thermophilus (strain ATCC 27634 / DSM 579 / HB8).